The sequence spans 832 residues: Beta-galactosidase (832 aa).

An N-terminal signal peptide occupies residues 1 to 25; it reads MALKLVLMLMVALLAAVWSPPAVTA. Residue glutamate 183 is the Proton donor of the active site. The active-site Nucleophile is glutamate 252. The 92-residue stretch at 741–832 folds into the SUEL-type lectin domain; sequence AYGRPKVHLS…KKLAVEAICE (92 aa).

Belongs to the glycosyl hydrolase 35 family.

The protein localises to the secreted. It localises to the extracellular space. It is found in the apoplast. The catalysed reaction is Hydrolysis of terminal non-reducing beta-D-galactose residues in beta-D-galactosides.. The chain is Beta-galactosidase from Asparagus officinalis (Garden asparagus).